Consider the following 61-residue polypeptide: DNA-directed RNA polymerase subunit Rpo6 (61 aa).

Belongs to the archaeal Rpo6/eukaryotic RPB6 RNA polymerase subunit family. As to quaternary structure, part of the RNA polymerase complex.

It is found in the cytoplasm. It catalyses the reaction RNA(n) + a ribonucleoside 5'-triphosphate = RNA(n+1) + diphosphate. Functionally, DNA-dependent RNA polymerase (RNAP) catalyzes the transcription of DNA into RNA using the four ribonucleoside triphosphates as substrates. In Thermoplasma acidophilum (strain ATCC 25905 / DSM 1728 / JCM 9062 / NBRC 15155 / AMRC-C165), this protein is DNA-directed RNA polymerase subunit Rpo6.